An 858-amino-acid polypeptide reads, in one-letter code: Protein lines (858 aa).

The tract at residues 1–102 (MDTSSAAGSG…NSPTTTPCSS (102 aa)) is disordered. Composition is skewed to low complexity over residues 20–30 (STVATSTTSAS) and 65–102 (LDAN…PCSS).

It belongs to the protein lines family. In terms of assembly, interacts with drm. As to expression, expressed throughout the embryo, including the hindgut, posterior midgut and embryonic epidermis.

The protein resides in the cytoplasm. Its subcellular location is the nucleus. Functionally, has a dual role as a segment polarity protein and as a modulator of the Abd-B protein. Required for Abd-B to activate the transcription of genes (including ems, cut and sal) that are involved in posterior spiracle morphogenesis. Also required for Abd-B to form an eighth abdominal denticle belt. Acts in a hierarchy downstream of drm and upstream of bowl during foregut and hindgut patterning and morphogenesis. Involved in cell rearrangement during elongation of the embryonic hindgut. Required to regulate expression of embryonic hindgut patterning genes in order to establish the large intestine and at least some rectum, and to repress small intestine fate. Required for late wingless (wg)-dependent cell fate specification in the dorsal embryonic epidermis. Acts in concert with wg to regulate expression of wg itself and also to regulate wg-target genes. May have a role in ventral epidermal patterning, independent of wg signaling. This chain is Protein lines, found in Drosophila melanogaster (Fruit fly).